We begin with the raw amino-acid sequence, 222 residues long: MSNLIEIKSKSTHTATVIFLHGLMDTGKGWETRMENIISMGGLDHIKFVLPTAPTIPISINFGNKGTAWCNVTAFYPGSEEDLIGLEKSMKLVEALIEEEIKNGIPAERIILSGFSQGGALTLYTGYQSKHKLAALITLSGFSPSLSLPSKIKPENKDIPLTMFHGTDDKVVNCKWGELSHKSYLKVGIKNSQFISITNLDHSSNEFELKQVHDLIEKYLPK.

Catalysis depends on charge relay system residues S116, D169, and H202.

The protein belongs to the AB hydrolase superfamily. AB hydrolase 2 family.

The protein resides in the cytoplasm. It localises to the nucleus. The catalysed reaction is S-hexadecanoyl-L-cysteinyl-[protein] + H2O = L-cysteinyl-[protein] + hexadecanoate + H(+). Functionally, hydrolyzes fatty acids from S-acylated cysteine residues in proteins with a strong preference for palmitoylated G-alpha proteins over other acyl substrates. Mediates the deacylation of G-alpha proteins such as GPA1 in vivo, but has weak or no activity toward palmitoylated Ras proteins. Has weak lysophospholipase activity in vitro; however such activity may not exist in vivo. This chain is Acyl-protein thioesterase 1 homolog 2, found in Dictyostelium discoideum (Social amoeba).